A 213-amino-acid polypeptide reads, in one-letter code: Dimethylamine corrinoid protein 3 (213 aa).

In terms of domain architecture, B12-binding N-terminal spans 1-91; that stretch reads MADIEGLLHE…DLPAGAEKKL (91 aa). In terms of domain architecture, B12-binding spans 92-213; that stretch reads GVIVNGTVEG…AVAKAKELLL (122 aa). Methylcob(III)alamin is bound at residue His104.

This sequence belongs to the methylamine corrinoid protein family.

It participates in one-carbon metabolism; methanogenesis from dimethylamine. Functionally, acts as a methyl group carrier between MtbB and MtbA. The sequence is that of Dimethylamine corrinoid protein 3 (mtbC3) from Methanosarcina acetivorans (strain ATCC 35395 / DSM 2834 / JCM 12185 / C2A).